The sequence spans 196 residues: Ribosomal RNA small subunit methyltransferase G (196 aa).

S-adenosyl-L-methionine contacts are provided by residues glycine 77, phenylalanine 82, 127–128 (AE), and arginine 140.

It belongs to the methyltransferase superfamily. RNA methyltransferase RsmG family.

It localises to the cytoplasm. In terms of biological role, specifically methylates the N7 position of a guanine in 16S rRNA. In Aquifex aeolicus (strain VF5), this protein is Ribosomal RNA small subunit methyltransferase G.